Consider the following 186-residue polypeptide: Translation initiation factor IF-3 (186 aa).

It belongs to the IF-3 family. As to quaternary structure, monomer.

It is found in the cytoplasm. Functionally, IF-3 binds to the 30S ribosomal subunit and shifts the equilibrium between 70S ribosomes and their 50S and 30S subunits in favor of the free subunits, thus enhancing the availability of 30S subunits on which protein synthesis initiation begins. In Borrelia garinii subsp. bavariensis (strain ATCC BAA-2496 / DSM 23469 / PBi) (Borreliella bavariensis), this protein is Translation initiation factor IF-3.